The following is a 765-amino-acid chain: LPS-assembly protein LptD (765 aa).

An N-terminal signal peptide occupies residues 1-18 (MQIRYFLALSLLPQVVLA).

This sequence belongs to the LptD family. As to quaternary structure, component of the lipopolysaccharide transport and assembly complex. Interacts with LptE and LptA.

Its subcellular location is the cell outer membrane. Functionally, together with LptE, is involved in the assembly of lipopolysaccharide (LPS) at the surface of the outer membrane. In Shewanella sp. (strain ANA-3), this protein is LPS-assembly protein LptD.